We begin with the raw amino-acid sequence, 222 residues long: Deoxyribose-phosphate aldolase (222 aa).

Residue D89 is the Proton donor/acceptor of the active site. K152 serves as the catalytic Schiff-base intermediate with acetaldehyde. K181 acts as the Proton donor/acceptor in catalysis.

It belongs to the DeoC/FbaB aldolase family. DeoC type 1 subfamily.

Its subcellular location is the cytoplasm. It catalyses the reaction 2-deoxy-D-ribose 5-phosphate = D-glyceraldehyde 3-phosphate + acetaldehyde. Its pathway is carbohydrate degradation; 2-deoxy-D-ribose 1-phosphate degradation; D-glyceraldehyde 3-phosphate and acetaldehyde from 2-deoxy-alpha-D-ribose 1-phosphate: step 2/2. Its function is as follows. Catalyzes a reversible aldol reaction between acetaldehyde and D-glyceraldehyde 3-phosphate to generate 2-deoxy-D-ribose 5-phosphate. The chain is Deoxyribose-phosphate aldolase from Alkaliphilus oremlandii (strain OhILAs) (Clostridium oremlandii (strain OhILAs)).